The primary structure comprises 351 residues: Heme A synthase (351 aa).

A run of 8 helical transmembrane segments spans residues 17-37 (WLIL…ATRL), 103-123 (LIGL…WLGQ), 129-149 (LVGL…MVSS), 164-184 (LMTH…LWLD), 201-221 (AMAL…VAGL), 261-281 (FNHR…AWAF), 289-309 (EFAF…LTLV), and 316-336 (LALV…YTVW). H263 is a binding site for heme. Residue H320 coordinates heme.

Belongs to the COX15/CtaA family. Type 2 subfamily. In terms of assembly, interacts with CtaB. It depends on heme b as a cofactor.

It is found in the cell membrane. It catalyses the reaction Fe(II)-heme o + 2 A + H2O = Fe(II)-heme a + 2 AH2. It participates in porphyrin-containing compound metabolism; heme A biosynthesis; heme A from heme O: step 1/1. Functionally, catalyzes the conversion of heme O to heme A by two successive hydroxylations of the methyl group at C8. The first hydroxylation forms heme I, the second hydroxylation results in an unstable dihydroxymethyl group, which spontaneously dehydrates, resulting in the formyl group of heme A. The protein is Heme A synthase of Hyphomonas neptunium (strain ATCC 15444).